Reading from the N-terminus, the 443-residue chain is Trigger factor (443 aa).

Residues 161–246 form the PPIase FKBP-type domain; sequence ADGVTITYHG…VISVTAPRLP (86 aa).

The protein belongs to the FKBP-type PPIase family. Tig subfamily.

The protein localises to the cytoplasm. The catalysed reaction is [protein]-peptidylproline (omega=180) = [protein]-peptidylproline (omega=0). Functionally, involved in protein export. Acts as a chaperone by maintaining the newly synthesized protein in an open conformation. Functions as a peptidyl-prolyl cis-trans isomerase. In Nitrosococcus oceani (strain ATCC 19707 / BCRC 17464 / JCM 30415 / NCIMB 11848 / C-107), this protein is Trigger factor.